The chain runs to 674 residues: Cysteine-rich receptor-like protein kinase 6 (674 aa).

A signal peptide spans 1–24; sequence MSSLISFNFLFLFSFLTSSFTASA. Residues 25–289 are Extracellular-facing; sequence QDPFYLNHYC…LPGKSGNSTV (265 aa). 2 consecutive Gnk2-homologous domains span residues 28-132 and 139-245; these read FYLN…HKNI and NEGE…LYPF. Residues asparagine 36, asparagine 43, asparagine 61, asparagine 70, asparagine 104, asparagine 178, and asparagine 247 are each glycosylated (N-linked (GlcNAc...) asparagine). Over residues 254–266 the composition is skewed to pro residues; the sequence is PPLPPPPPPPPPR. Residues 254-284 form a disordered region; that stretch reads PPLPPPPPPPPPRESLVSTPPISSSSLPGKS. A compositionally biased stretch (low complexity) spans 268–284; it reads SLVSTPPISSSSLPGKS. The N-linked (GlcNAc...) asparagine glycan is linked to asparagine 286. Residues 290-310 form a helical membrane-spanning segment; that stretch reads LVVAVVVLAVLLFIALVGYCF. The Cytoplasmic portion of the chain corresponds to 311–674; the sequence is LAKKKKKTFD…DESITDLYPR (364 aa). The 287-residue stretch at 351-637 folds into the Protein kinase domain; the sequence is FAESNKIGRG…TLPVPRQPGF (287 aa). ATP is bound by residues 357–365 and lysine 379; that span reads IGRGGFGEV. Tyrosine 424 carries the post-translational modification Phosphotyrosine. Aspartate 476 serves as the catalytic Proton acceptor. Serine 480 bears the Phosphoserine mark. Position 516 is a phosphothreonine (threonine 516). Tyrosine 524 carries the post-translational modification Phosphotyrosine. The segment at 648 to 674 is disordered; the sequence is LDSDQSTTTKSFPASIDDESITDLYPR. The span at 650–659 shows a compositional bias: polar residues; it reads SDQSTTTKSF.

The protein belongs to the protein kinase superfamily. Ser/Thr protein kinase family. CRK subfamily.

Its subcellular location is the membrane. It carries out the reaction L-seryl-[protein] + ATP = O-phospho-L-seryl-[protein] + ADP + H(+). The catalysed reaction is L-threonyl-[protein] + ATP = O-phospho-L-threonyl-[protein] + ADP + H(+). The sequence is that of Cysteine-rich receptor-like protein kinase 6 (CRK6) from Arabidopsis thaliana (Mouse-ear cress).